A 95-amino-acid chain; its full sequence is Complement inhibitor RaCI5 (95 aa).

The first 21 residues, 1–21 (MNAVIVLCVTISAVLIHQCYS), serve as a signal peptide directing secretion. 3 disulfides stabilise this stretch: Cys-35–Cys-59, Cys-40–Cys-61, and Cys-55–Cys-76.

This sequence belongs to the RaCI family. Expressed in salivary glands.

Its subcellular location is the secreted. Functionally, complement inhibitor. Prevents complement-mediated C5 activation by binding to C5. Binds C5 at a different binding site than the other tick complement inhibitors OmCI and CirpT1, and the drug eculizumab. This Rhipicephalus appendiculatus (Brown ear tick) protein is Complement inhibitor RaCI5.